The chain runs to 638 residues: 1-deoxy-D-xylulose-5-phosphate synthase (638 aa).

Residues His72 and 113-115 (GHA) each bind thiamine diphosphate. Asp144 serves as a coordination point for Mg(2+). Residues 145–146 (GA), Asn174, Tyr287, and Glu370 contribute to the thiamine diphosphate site. Asn174 lines the Mg(2+) pocket.

This sequence belongs to the transketolase family. DXPS subfamily. In terms of assembly, homodimer. Mg(2+) is required as a cofactor. It depends on thiamine diphosphate as a cofactor.

The catalysed reaction is D-glyceraldehyde 3-phosphate + pyruvate + H(+) = 1-deoxy-D-xylulose 5-phosphate + CO2. The protein operates within metabolic intermediate biosynthesis; 1-deoxy-D-xylulose 5-phosphate biosynthesis; 1-deoxy-D-xylulose 5-phosphate from D-glyceraldehyde 3-phosphate and pyruvate: step 1/1. Catalyzes the acyloin condensation reaction between C atoms 2 and 3 of pyruvate and glyceraldehyde 3-phosphate to yield 1-deoxy-D-xylulose-5-phosphate (DXP). This Thermosynechococcus vestitus (strain NIES-2133 / IAM M-273 / BP-1) protein is 1-deoxy-D-xylulose-5-phosphate synthase.